A 476-amino-acid polypeptide reads, in one-letter code: Glycogen synthase (476 aa).

Position 15 (Lys-15) interacts with ADP-alpha-D-glucose.

Belongs to the glycosyltransferase 1 family. Bacterial/plant glycogen synthase subfamily.

It catalyses the reaction [(1-&gt;4)-alpha-D-glucosyl](n) + ADP-alpha-D-glucose = [(1-&gt;4)-alpha-D-glucosyl](n+1) + ADP + H(+). Its pathway is glycan biosynthesis; glycogen biosynthesis. Functionally, synthesizes alpha-1,4-glucan chains using ADP-glucose. In Lactobacillus acidophilus (strain ATCC 700396 / NCK56 / N2 / NCFM), this protein is Glycogen synthase.